The chain runs to 141 residues: Nucleoside diphosphate kinase (141 aa).

ATP-binding residues include Lys-11, Phe-59, Arg-87, Thr-93, Arg-104, and Asn-114. Catalysis depends on His-117, which acts as the Pros-phosphohistidine intermediate.

The protein belongs to the NDK family. In terms of assembly, homotetramer. It depends on Mg(2+) as a cofactor.

Its subcellular location is the cytoplasm. The catalysed reaction is a 2'-deoxyribonucleoside 5'-diphosphate + ATP = a 2'-deoxyribonucleoside 5'-triphosphate + ADP. The enzyme catalyses a ribonucleoside 5'-diphosphate + ATP = a ribonucleoside 5'-triphosphate + ADP. Functionally, major role in the synthesis of nucleoside triphosphates other than ATP. The ATP gamma phosphate is transferred to the NDP beta phosphate via a ping-pong mechanism, using a phosphorylated active-site intermediate. The polypeptide is Nucleoside diphosphate kinase (Paraburkholderia phytofirmans (strain DSM 17436 / LMG 22146 / PsJN) (Burkholderia phytofirmans)).